A 764-amino-acid chain; its full sequence is MIRSLRAVSRLGARGFSSFAAARQENTTVGTTYQEELDVVNQLKGSVTADDVTRLARMRNIGISAHIDSGKTTFSERILFYTGRTKEIHEVRGKDGVGAKMDHMDLEREKGITIQSAATYATWIKENQDYHFNVIDTPGHIDFTIEVERALRVLDGAVLVVCAVSGVQSQTMTVDRQMRRYNVPRVTFINKMDRMGADPWKAIDQINAKLKTRAAAIQVPIGSEGDLAGVVDIVKEVAYYNDGASGETIRVAEIPEDLKELVAEKRDLLIQTLADVDDEIAECYILEETPTEEQLRGAIRRATIARTFTPVLMGSALANRGVQPVLDAICEYLPDPSDVVNTALDIKKDETPVHLTPAAKAPFVGLAFKLEDGKYGQLTYLRVYQGQLKKGMSIINAKTGKKTKLARLVRMHSDEMEDVDSVGAGEICATFGVDCASGDTFTDGEVTYSMSSMFVPDPVISLAITPKDKGSLTNFSKAMNRFQKEDPTFRVHFDAESKETIISGMGELHLEIYVERMKREYNVVCETGKPQVAYRETITTAAPLDFTHKRQSGGAGQYARIIGEMSPVTDMNAVNEGKATFAAENIFKSEIVGGKIPEKFILACDRSFHETAEKGPLTGSRVLGVEMLINDGNTHVVDSSELAFKVATQRGFYETFMQCSPVILEPIMTVTLTAPVEFQGALIALMNKNQALISDQDIGSEEVTLSGECSLNQMFGFATHLRACTQGKGEFSLEFSHYAPCSPHLQKELVDAHQKKLQAERDGK.

Residues 1-23 (MIRSLRAVSRLGARGFSSFAAAR) constitute a mitochondrion transit peptide. The tr-type G domain maps to 56-337 (ARMRNIGISA…AICEYLPDPS (282 aa)). GTP is bound by residues 65–72 (AHIDSGKT), 136–140 (DTPGH), and 190–193 (NKMD).

Belongs to the TRAFAC class translation factor GTPase superfamily. Classic translation factor GTPase family. EF-G/EF-2 subfamily.

The protein resides in the mitochondrion. It functions in the pathway protein biosynthesis; polypeptide chain elongation. Mitochondrial GTPase that catalyzes the GTP-dependent ribosomal translocation step during translation elongation. During this step, the ribosome changes from the pre-translocational (PRE) to the post-translocational (POST) state as the newly formed A-site-bound peptidyl-tRNA and P-site-bound deacylated tRNA move to the P and E sites, respectively. Catalyzes the coordinated movement of the two tRNA molecules, the mRNA and conformational changes in the ribosome. This Yarrowia lipolytica (strain CLIB 122 / E 150) (Yeast) protein is Elongation factor G, mitochondrial.